Reading from the N-terminus, the 589-residue chain is Coronatine-insensitive protein homolog 2 (589 aa).

Residues 18–59 form the F-box domain; it reads IPDVALGLVMGFVEDPWDRDAISLVCRHWCRVDALSRKHVTV. Jasmonate-binding residues include Arg87, Arg352, Arg414, and Arg501.

In terms of assembly, interacts with TIFY9/JAZ5, TIFY11C/JAZ11 and TIFY11D/JAZ12 in a coronatine-dependent manner.

Its function is as follows. Involved in jasmonate (JA) signaling. Required for jasmonate signaling in plant defense responses. Component of SCF(COI1) E3 ubiquitin ligase complexes, which may mediate the ubiquitination and subsequent proteasomal degradation of target proteins, including TIFY/JAZ family. The protein is Coronatine-insensitive protein homolog 2 of Oryza sativa subsp. indica (Rice).